The chain runs to 148 residues: UPF0178 protein lpl0088 (148 aa).

Belongs to the UPF0178 family.

The sequence is that of UPF0178 protein lpl0088 from Legionella pneumophila (strain Lens).